Here is a 315-residue protein sequence, read N- to C-terminus: Ribosomal RNA small subunit methyltransferase H (315 aa).

Residues 35–37 (AGH), D55, F84, D105, and Q112 contribute to the S-adenosyl-L-methionine site.

It belongs to the methyltransferase superfamily. RsmH family.

Its subcellular location is the cytoplasm. The catalysed reaction is cytidine(1402) in 16S rRNA + S-adenosyl-L-methionine = N(4)-methylcytidine(1402) in 16S rRNA + S-adenosyl-L-homocysteine + H(+). Specifically methylates the N4 position of cytidine in position 1402 (C1402) of 16S rRNA. In Streptococcus agalactiae serotype III (strain NEM316), this protein is Ribosomal RNA small subunit methyltransferase H.